Consider the following 24-residue polypeptide: Neurotoxin-2 (24 aa).

Residues 1 to 24 enclose the LCN-type CS-alpha/beta domain; it reads EDGYLLNRDTGCKVSCGTCRYCND.

Belongs to the long (4 C-C) scorpion toxin superfamily. Sodium channel inhibitor family. Alpha subfamily. In terms of tissue distribution, expressed by the venom gland.

The protein localises to the secreted. In terms of biological role, binds to sodium channels (Nav) and inhibits the inactivation of the activated channels, thereby blocking neuronal transmission. This toxin is active against mammals. The polypeptide is Neurotoxin-2 (Hottentotta tamulus (Eastern Indian scorpion)).